Reading from the N-terminus, the 148-residue chain is Lysozyme C-2 (148 aa).

The N-terminal stretch at 1–18 is a signal peptide; it reads MKTLLTLGLLLLSVTAQA. Residues 19 to 148 form the C-type lysozyme domain; the sequence is KVYERCEFAR…LSQYIRNCGV (130 aa). Cystine bridges form between Cys-24/Cys-146, Cys-48/Cys-134, Cys-83/Cys-99, and Cys-95/Cys-113. Residues Glu-53 and Asp-71 contribute to the active site.

Belongs to the glycosyl hydrolase 22 family. In terms of assembly, monomer. As to expression, expressed weakly in myeloblasts, moderately in immature macrophages, and strongly in both mature macrophages and macrophage-rich tissues.

It localises to the secreted. The catalysed reaction is Hydrolysis of (1-&gt;4)-beta-linkages between N-acetylmuramic acid and N-acetyl-D-glucosamine residues in a peptidoglycan and between N-acetyl-D-glucosamine residues in chitodextrins.. Its function is as follows. Lysozymes have primarily a bacteriolytic function; those in tissues and body fluids are associated with the monocyte-macrophage system and enhance the activity of immunoagents. Lyz2 is active against a range of Gram-positive and Gram-negative bacteria. More effective than Lyz1 in killing Gram-negative bacteria. Lyz1 and Lyz2 are equally effective in killing Gram-positive bacteria. The sequence is that of Lysozyme C-2 (Lyz2) from Mus musculus (Mouse).